The following is a 140-amino-acid chain: Putative pre-16S rRNA nuclease (140 aa).

Belongs to the YqgF nuclease family.

It localises to the cytoplasm. In terms of biological role, could be a nuclease involved in processing of the 5'-end of pre-16S rRNA. The polypeptide is Putative pre-16S rRNA nuclease (Vibrio vulnificus (strain CMCP6)).